A 433-amino-acid chain; its full sequence is Trigger factor (433 aa).

In terms of domain architecture, PPIase FKBP-type spans 161-246; sequence NDRVIIDFVG…LNKVENMILP (86 aa).

This sequence belongs to the FKBP-type PPIase family. Tig subfamily.

The protein resides in the cytoplasm. It carries out the reaction [protein]-peptidylproline (omega=180) = [protein]-peptidylproline (omega=0). Functionally, involved in protein export. Acts as a chaperone by maintaining the newly synthesized protein in an open conformation. Functions as a peptidyl-prolyl cis-trans isomerase. The polypeptide is Trigger factor (Haemophilus ducreyi (strain 35000HP / ATCC 700724)).